Here is a 157-residue protein sequence, read N- to C-terminus: uncharacterized protein (157 aa).

This is an uncharacterized protein from Pseudoalteromonas espejiana (Bacteriophage PM2).